We begin with the raw amino-acid sequence, 463 residues long: MGVGPASLLAALLLLLSGDRAVRCDTPANCTYLDLLGTWVFQVGSSGSLRDVNCSVMGPPEKKVVVHLQKLDTAYDDLGNSGHFTIIYNQGFEIVLNDYKWFAFFKYKEEGIKVTIYCNETMTGWVHDVLGRNWACFTGKKVGTASENVYVNTAHLKNSQEKYSNRLYKYDHNFVKAINAIQKSWTATTYMEYETLTLGDMIKRSGGHSRKIPRPKPTPLTAEIQQKILHLPTSWDWRNVHGINFVSPVRNQASCGSCYSFASVGMLEARIRILTNNSQTPILSSQEVVSCSQYAQGCEGGFPYLTAGKYAQDFGLVEEACFPYTGTDSPCKMKEDCFRYYSSEYHYVGGFYGGCNEALMKLELVYHGPLAVAFEVYDDFLHYQNGIYHHTGLRDPFNPFELTNHAVLLVGYGTDSASGMDYWIVKNSWGTSWGEDGYFRIRRGTDECAIESIAVAATPIPKL.

The first 24 residues, 1-24 (MGVGPASLLAALLLLLSGDRAVRC), serve as a signal peptide directing secretion. N-linked (GlcNAc...) asparagine glycosylation is found at Asn29, Asn53, and Asn119. Cystine bridges form between Cys30–Cys118, Cys54–Cys136, Cys255–Cys298, Cys291–Cys331, and Cys321–Cys337. A propeptide spanning residues 135–230 (ACFTGKKVGT…TAEIQQKILH (96 aa)) is cleaved from the precursor. Residue Cys258 is part of the active site. The N-linked (GlcNAc...) asparagine glycan is linked to Asn276. Residues Phe302 and Tyr304 each contribute to the chloride site. Tyr347 is a binding site for chloride. Active-site residues include His405 and Asn427.

Belongs to the peptidase C1 family. As to quaternary structure, tetramer of heterotrimers consisting of exclusion domain, heavy- and light chains. It depends on chloride as a cofactor.

The protein resides in the lysosome. The enzyme catalyses Release of an N-terminal dipeptide, Xaa-Yaa-|-Zaa-, except when Xaa is Arg or Lys, or Yaa or Zaa is Pro.. Functionally, thiol protease. Has dipeptidylpeptidase activity. Active against a broad range of dipeptide substrates composed of both polar and hydrophobic amino acids. Proline cannot occupy the P1 position and arginine cannot occupy the P2 position of the substrate. Can act as both an exopeptidase and endopeptidase. Activates serine proteases such as elastase, cathepsin G and granzymes A and B. This Macaca fascicularis (Crab-eating macaque) protein is Dipeptidyl peptidase 1 (CTSC).